Here is a 947-residue protein sequence, read N- to C-terminus: Receptor-like protein 56 (947 aa).

The N-terminal stretch at 1-27 (MEGKVFSGQKLILVMLLLGHLHGFSSC) is a signal peptide. Topologically, residues 28-899 (IEKERKALLE…EDDKEVAIDM (872 aa)) are extracellular. 3 N-linked (GlcNAc...) asparagine glycosylation sites follow: Asn60, Asn75, and Asn98. 9 LRR repeats span residues 105–128 (FEEV…VEGY), 134–157 (LRNL…FLNA), 159–182 (TSLT…ELKN), 183–207 (LTNL…EFPY), 209–232 (KKLK…GLKN), 233–257 (LTNL…VFCE), 259–281 (KNLQ…CFGN), 282–305 (LNKL…SFSS), and 307–330 (ESLE…PLTN). Residues Asn141, Asn148, and Asn182 are each glycosylated (N-linked (GlcNAc...) asparagine). An N-linked (GlcNAc...) asparagine glycan is attached at Asn232. An N-linked (GlcNAc...) asparagine glycan is attached at Asn330. The stretch at 332–356 (TKLKVFIFSSKDDMVQVKIESTWQP) is one LRR 10; degenerate repeat. LRR repeat units lie at residues 357-380 (LFQL…LMYQ), 381-404 (KNLH…LLEN), 405-427 (NPEL…PTSV), 428-450 (HNLQ…NFGR), 452-476 (LPNL…MGEM), 477-500 (YNIS…FVSS), 502-527 (FSLS…NFTS), 529-549 (IVLR…LLTL), 550-575 (VDLC…VFEY), 577-598 (NFLD…SLDN), 600-616 (LFLH…DTFL), 617-640 (GSIQ…VDTQ), 642-663 (ISFL…LCEF), 664-686 (SKMR…CFNN), 757-780 (LNSM…ELGD), 781-804 (LFKL…SFSK), 805-829 (LQDI…LTNL), and 831-854 (SLAI…QFNT). A glycan (N-linked (GlcNAc...) asparagine) is linked at Asn415. N-linked (GlcNAc...) asparagine glycosylation is found at Asn459, Asn478, Asn488, and Asn524. Asn606 carries N-linked (GlcNAc...) asparagine glycosylation. An N-linked (GlcNAc...) asparagine glycan is attached at Asn686. Residues Asn788, Asn828, Asn836, and Asn841 are each glycosylated (N-linked (GlcNAc...) asparagine). The helical transmembrane segment at 900-920 (LVFYWSTAGTYVTALIGILVL) threads the bilayer. Residues 921–947 (MCVDCSWRRAWLRLVDAFIASAKSKLA) are Cytoplasmic-facing.

The protein belongs to the RLP family.

The protein localises to the cell membrane. The polypeptide is Receptor-like protein 56 (Arabidopsis thaliana (Mouse-ear cress)).